Reading from the N-terminus, the 245-residue chain is 1-(5-phosphoribosyl)-5-[(5-phosphoribosylamino)methylideneamino] imidazole-4-carboxamide isomerase (245 aa).

Asp15 serves as the catalytic Proton acceptor. Catalysis depends on Asp135, which acts as the Proton donor.

Belongs to the HisA/HisF family.

It localises to the cytoplasm. It carries out the reaction 1-(5-phospho-beta-D-ribosyl)-5-[(5-phospho-beta-D-ribosylamino)methylideneamino]imidazole-4-carboxamide = 5-[(5-phospho-1-deoxy-D-ribulos-1-ylimino)methylamino]-1-(5-phospho-beta-D-ribosyl)imidazole-4-carboxamide. The protein operates within amino-acid biosynthesis; L-histidine biosynthesis; L-histidine from 5-phospho-alpha-D-ribose 1-diphosphate: step 4/9. The sequence is that of 1-(5-phosphoribosyl)-5-[(5-phosphoribosylamino)methylideneamino] imidazole-4-carboxamide isomerase from Haloquadratum walsbyi (strain DSM 16790 / HBSQ001).